A 156-amino-acid polypeptide reads, in one-letter code: Ribosomal RNA large subunit methyltransferase H (156 aa).

Residues leucine 73, glycine 104, and 123–128 (VSSLTL) each bind S-adenosyl-L-methionine.

It belongs to the RNA methyltransferase RlmH family. In terms of assembly, homodimer.

It is found in the cytoplasm. The catalysed reaction is pseudouridine(1915) in 23S rRNA + S-adenosyl-L-methionine = N(3)-methylpseudouridine(1915) in 23S rRNA + S-adenosyl-L-homocysteine + H(+). Functionally, specifically methylates the pseudouridine at position 1915 (m3Psi1915) in 23S rRNA. The protein is Ribosomal RNA large subunit methyltransferase H of Paraburkholderia xenovorans (strain LB400).